We begin with the raw amino-acid sequence, 402 residues long: 4-hydroxy-3-methylbut-2-enyl diphosphate reductase (402 aa).

A [4Fe-4S] cluster-binding site is contributed by C66. H96 is a (2E)-4-hydroxy-3-methylbut-2-enyl diphosphate binding site. H96 is a binding site for dimethylallyl diphosphate. H96 provides a ligand contact to isopentenyl diphosphate. Residue C157 coordinates [4Fe-4S] cluster. Residue H185 participates in (2E)-4-hydroxy-3-methylbut-2-enyl diphosphate binding. Dimethylallyl diphosphate is bound at residue H185. H185 serves as a coordination point for isopentenyl diphosphate. The active-site Proton donor is E187. T250 is a (2E)-4-hydroxy-3-methylbut-2-enyl diphosphate binding site. C288 lines the [4Fe-4S] cluster pocket. Residues S317, S318, N319, and S379 each contribute to the (2E)-4-hydroxy-3-methylbut-2-enyl diphosphate site. Dimethylallyl diphosphate is bound by residues S317, S318, N319, and S379. Residues S317, S318, N319, and S379 each contribute to the isopentenyl diphosphate site.

The protein belongs to the IspH family. [4Fe-4S] cluster serves as cofactor.

The enzyme catalyses isopentenyl diphosphate + 2 oxidized [2Fe-2S]-[ferredoxin] + H2O = (2E)-4-hydroxy-3-methylbut-2-enyl diphosphate + 2 reduced [2Fe-2S]-[ferredoxin] + 2 H(+). The catalysed reaction is dimethylallyl diphosphate + 2 oxidized [2Fe-2S]-[ferredoxin] + H2O = (2E)-4-hydroxy-3-methylbut-2-enyl diphosphate + 2 reduced [2Fe-2S]-[ferredoxin] + 2 H(+). The protein operates within isoprenoid biosynthesis; dimethylallyl diphosphate biosynthesis; dimethylallyl diphosphate from (2E)-4-hydroxy-3-methylbutenyl diphosphate: step 1/1. Its pathway is isoprenoid biosynthesis; isopentenyl diphosphate biosynthesis via DXP pathway; isopentenyl diphosphate from 1-deoxy-D-xylulose 5-phosphate: step 6/6. Catalyzes the conversion of 1-hydroxy-2-methyl-2-(E)-butenyl 4-diphosphate (HMBPP) into a mixture of isopentenyl diphosphate (IPP) and dimethylallyl diphosphate (DMAPP). Acts in the terminal step of the DOXP/MEP pathway for isoprenoid precursor biosynthesis. The sequence is that of 4-hydroxy-3-methylbut-2-enyl diphosphate reductase from Nostoc sp. (strain PCC 7120 / SAG 25.82 / UTEX 2576).